The following is a 110-amino-acid chain: Cytochrome subunit of sulfide dehydrogenase (110 aa).

A signal peptide spans 1 to 16 (MLAAAPLLLASGNGFA). The heme c site is built by cysteine 41, cysteine 44, histidine 45, and methionine 83.

As to quaternary structure, dimer of one cytochrome and one flavoprotein. In terms of processing, binds 1 heme c group covalently per subunit.

Its subcellular location is the periplasm. Functionally, monoheme cytochrome that function as the electron transport subunit of sulfide dehydrogenase. In Chlorobaculum tepidum (strain ATCC 49652 / DSM 12025 / NBRC 103806 / TLS) (Chlorobium tepidum), this protein is Cytochrome subunit of sulfide dehydrogenase (fccA).